Here is a 338-residue protein sequence, read N- to C-terminus: Cytoskeleton protein RodZ (338 aa).

The Cytoplasmic portion of the chain corresponds to 1-111; it reads MNTEATHDQN…LGKRRKKRDG (111 aa). Residues 19 to 71 enclose the HTH cro/C1-type domain; the sequence is LRNAREQLGLSQQAVAERLCLKVSTVRDIEEDKAPADLASTFLRGYIRSYARL. Residues 30-49 constitute a DNA-binding region (H-T-H motif); sequence QQAVAERLCLKVSTVRDIEE. The helical; Signal-anchor for type II membrane protein transmembrane segment at 112–132 threads the bilayer; sequence WLMTFTWLVLFVVIGLSGAWW. The Periplasmic portion of the chain corresponds to 133 to 338; that stretch reads WQDHKAQQEE…TLNAEQSPAQ (206 aa). Residues 155–169 show a composition bias toward polar residues; sequence NANGTNSQSIPLENS. A disordered region spans residues 155 to 240; sequence NANGTNSQSI…TTPDTATPLP (86 aa). The span at 170-188 shows a compositional bias: low complexity; the sequence is TTTVPEATPAPAAPVDTTA. Residues 203-217 are compositionally biased toward polar residues; it reads EPQQNAVVPPSQANV. The segment covering 218 to 240 has biased composition (low complexity); it reads DTATTAPAAPATTTTPDTATPLP.

It belongs to the RodZ family.

It localises to the cell inner membrane. Cytoskeletal protein that is involved in cell-shape control through regulation of the length of the long axis. In Escherichia fergusonii (strain ATCC 35469 / DSM 13698 / CCUG 18766 / IAM 14443 / JCM 21226 / LMG 7866 / NBRC 102419 / NCTC 12128 / CDC 0568-73), this protein is Cytoskeleton protein RodZ.